Here is an 826-residue protein sequence, read N- to C-terminus: Beta-galactosidase 7 (826 aa).

Positions 1-25 (MKMKHFTRLLSLFFILITSLSLAKS) are cleaved as a signal peptide. A glycan (N-linked (GlcNAc...) asparagine) is linked at asparagine 154. The active-site Proton donor is glutamate 184. Glutamate 253 functions as the Nucleophile in the catalytic mechanism. Residues asparagine 254, asparagine 351, asparagine 380, asparagine 491, asparagine 665, asparagine 706, asparagine 797, and asparagine 801 are each glycosylated (N-linked (GlcNAc...) asparagine). The 87-residue stretch at 740 to 826 (AHEHNKVELS…PKKLAVELEC (87 aa)) folds into the SUEL-type lectin domain.

It belongs to the glycosyl hydrolase 35 family. In terms of tissue distribution, expressed in flowers.

Its subcellular location is the secreted. The protein localises to the extracellular space. It is found in the apoplast. It carries out the reaction Hydrolysis of terminal non-reducing beta-D-galactose residues in beta-D-galactosides.. The protein is Beta-galactosidase 7 (BGAL7) of Arabidopsis thaliana (Mouse-ear cress).